Reading from the N-terminus, the 331-residue chain is DNA-directed RNA polymerase subunit alpha (331 aa).

The alpha N-terminal domain (alpha-NTD) stretch occupies residues 1 to 233 (MVREKVTVST…DLFIPFLHAE (233 aa)). Positions 265–331 (KEIELKYIFI…GILEKHFTID (67 aa)) are alpha C-terminal domain (alpha-CTD).

This sequence belongs to the RNA polymerase alpha chain family. In plastids the minimal PEP RNA polymerase catalytic core is composed of four subunits: alpha, beta, beta', and beta''. When a (nuclear-encoded) sigma factor is associated with the core the holoenzyme is formed, which can initiate transcription.

It localises to the plastid. Its subcellular location is the chloroplast. The catalysed reaction is RNA(n) + a ribonucleoside 5'-triphosphate = RNA(n+1) + diphosphate. Functionally, DNA-dependent RNA polymerase catalyzes the transcription of DNA into RNA using the four ribonucleoside triphosphates as substrates. This is DNA-directed RNA polymerase subunit alpha from Vitis vinifera (Grape).